We begin with the raw amino-acid sequence, 446 residues long: Radical S-adenosyl methionine domain-containing protein 1, mitochondrial (446 aa).

One can recognise a Radical SAM core domain in the interval 15–277; the sequence is KGYNKLKDLP…VCEAEAMGFQ (263 aa). Residues Cys34, Cys38, and Cys41 each coordinate [4Fe-4S] cluster. S-adenosyl-L-methionine contacts are provided by residues Gly94, 95-96, Glu130, Gln159, Arg171, and Asp195; that span reads GT.

This sequence belongs to the anaerobic coproporphyrinogen-III oxidase family. HemW subfamily.

Its subcellular location is the mitochondrion. May be a heme chaperone, appears to bind heme. Homologous bacterial proteins do not have oxygen-independent coproporphyrinogen-III oxidase activity. Binds 1 [4Fe-4S] cluster. The cluster is coordinated with 3 cysteines and an exchangeable S-adenosyl-L-methionine. This chain is Radical S-adenosyl methionine domain-containing protein 1, mitochondrial (rsad1), found in Dictyostelium discoideum (Social amoeba).